We begin with the raw amino-acid sequence, 241 residues long: Sugar fermentation stimulation protein homolog (241 aa).

The protein belongs to the SfsA family.

The polypeptide is Sugar fermentation stimulation protein homolog (Trichormus variabilis (strain ATCC 29413 / PCC 7937) (Anabaena variabilis)).